The sequence spans 1311 residues: Transcriptional regulator ATRX homolog (1311 aa).

The interval 1 to 384 (MGKKNPNARH…KQKNKRKHIR (384 aa)) is disordered. Residues 28 to 40 (SRRESATESKSAS) are compositionally biased toward basic and acidic residues. Residues 61–83 (KASGKATVSSSSDSDQAVANSSA) are compositionally biased toward low complexity. Polar residues predominate over residues 114-125 (RGSQQKNVTIND). Phosphoserine occurs at positions 126 and 127. Positions 155–166 (SDSEEVDEEEES) are enriched in acidic residues. Over residues 181–202 (KPEKNSSKASKESIEKRQKAQK) the composition is skewed to basic and acidic residues. Low complexity predominate over residues 219–237 (RRGSLSSERSSRASSSRAE). Residues 241-265 (RPKRCVVRLKRVSLPKTKPAQKPKK) are compositionally biased toward basic residues. Phosphoserine occurs at positions 267, 268, and 270. The span at 290-306 (EADSDYEAPAAEEEEEE) shows a compositional bias: acidic residues. Phosphoserine is present on residues Ser336, Ser338, Ser342, and Ser343. Residues 336–351 (SESDKGSSDFEPEEKQ) show a composition bias toward basic and acidic residues. Residues 352–361 (KKKGRKRIKK) show a composition bias toward basic residues. The Helicase ATP-binding domain occupies 476–664 (ESQEKPGSGC…YCMIQFVKPN (189 aa)). Residue 489 to 496 (HCMGLGKT) participates in ATP binding. The DEGH box signature appears at 615 to 618 (DEGH). The segment at 837–878 (ASSGKVKKRKTRNGNAGGGDSDSDLEMLGGLGGGSSVQKDDP) is disordered. Ser857 and Ser859 each carry phosphoserine. Residues 905–1085 (RLLQQCEAIG…SRHYNQTDLM (181 aa)) enclose the Helicase C-terminal domain. The segment at 1285 to 1311 (MAGGSVAHGPPAAPAPGFEPDKVYEID) is disordered.

This sequence belongs to the SNF2/RAD54 helicase family.

It localises to the nucleus. Its subcellular location is the chromosome. It catalyses the reaction ATP + H2O = ADP + phosphate + H(+). Global transcriptional regulator. Modifies gene expression by affecting chromatin. The protein is Transcriptional regulator ATRX homolog (XNP) of Drosophila melanogaster (Fruit fly).